We begin with the raw amino-acid sequence, 408 residues long: Histidine--tRNA ligase (408 aa).

Belongs to the class-II aminoacyl-tRNA synthetase family. Homodimer.

The protein localises to the cytoplasm. The catalysed reaction is tRNA(His) + L-histidine + ATP = L-histidyl-tRNA(His) + AMP + diphosphate + H(+). In Campylobacter jejuni subsp. jejuni serotype O:6 (strain 81116 / NCTC 11828), this protein is Histidine--tRNA ligase.